Here is a 259-residue protein sequence, read N- to C-terminus: Proteasome subunit alpha (259 aa).

It belongs to the peptidase T1A family. As to quaternary structure, the 20S proteasome core is composed of 14 alpha and 14 beta subunits that assemble into four stacked heptameric rings, resulting in a barrel-shaped structure. The two inner rings, each composed of seven catalytic beta subunits, are sandwiched by two outer rings, each composed of seven alpha subunits. The catalytic chamber with the active sites is on the inside of the barrel. Has a gated structure, the ends of the cylinder being occluded by the N-termini of the alpha-subunits. Is capped at one or both ends by the proteasome regulatory ATPase, PAN.

Its subcellular location is the cytoplasm. The formation of the proteasomal ATPase PAN-20S proteasome complex, via the docking of the C-termini of PAN into the intersubunit pockets in the alpha-rings, triggers opening of the gate for substrate entry. Interconversion between the open-gate and close-gate conformations leads to a dynamic regulation of the 20S proteasome proteolysis activity. Its function is as follows. Component of the proteasome core, a large protease complex with broad specificity involved in protein degradation. This is Proteasome subunit alpha from Methanococcus maripaludis (strain C5 / ATCC BAA-1333).